The chain runs to 145 residues: Actin-related protein 4A (145 aa).

The tract at residues 47–66 (IDDAANTTEDAKESDKEKGK) is disordered. A compositionally biased stretch (basic and acidic residues) spans 55–64 (EDAKESDKEK).

The protein belongs to the actin family. ARP4 subfamily. As to expression, expressed in roots, leaves and flowers.

In Arabidopsis thaliana (Mouse-ear cress), this protein is Actin-related protein 4A (ARP4A).